The primary structure comprises 117 residues: Large ribosomal subunit protein uL18 (117 aa).

Belongs to the universal ribosomal protein uL18 family. Part of the 50S ribosomal subunit; part of the 5S rRNA/L5/L18/L25 subcomplex. Contacts the 5S and 23S rRNAs.

Functionally, this is one of the proteins that bind and probably mediate the attachment of the 5S RNA into the large ribosomal subunit, where it forms part of the central protuberance. The chain is Large ribosomal subunit protein uL18 from Francisella tularensis subsp. novicida (strain U112).